The following is a 290-amino-acid chain: Ribosomal RNA small subunit methyltransferase A (290 aa).

S-adenosyl-L-methionine-binding residues include Asn-27, Leu-29, Gly-54, Glu-75, Asp-100, and Asn-125.

This sequence belongs to the class I-like SAM-binding methyltransferase superfamily. rRNA adenine N(6)-methyltransferase family. RsmA subfamily.

It is found in the cytoplasm. The catalysed reaction is adenosine(1518)/adenosine(1519) in 16S rRNA + 4 S-adenosyl-L-methionine = N(6)-dimethyladenosine(1518)/N(6)-dimethyladenosine(1519) in 16S rRNA + 4 S-adenosyl-L-homocysteine + 4 H(+). Functionally, specifically dimethylates two adjacent adenosines (A1518 and A1519) in the loop of a conserved hairpin near the 3'-end of 16S rRNA in the 30S particle. May play a critical role in biogenesis of 30S subunits. The sequence is that of Ribosomal RNA small subunit methyltransferase A from Streptococcus equi subsp. zooepidemicus (strain H70).